The primary structure comprises 564 residues: 4-hydroxybutyrate--CoA ligase 1 (564 aa).

A helical transmembrane segment spans residues 105–125 (VHPMHWAVFLAVIKGGFVMVP). Residues 204–212 (TSGTTGMPK), 343–348 (DFYGQT), D429, and R444 contribute to the ATP site. T348 is a substrate binding site. 452–454 (SDY) is a CoA binding site. R455 is a substrate binding site. Residues R484, K513, and 521–523 (VPR) contribute to the CoA site. K538 is a binding site for ATP.

This sequence belongs to the ATP-dependent AMP-binding enzyme family. The cofactor is Mg(2+). Requires Mn(2+) as cofactor.

Its subcellular location is the membrane. It carries out the reaction 4-hydroxybutanoate + ATP + CoA = 4-hydroxybutanoyl-CoA + AMP + diphosphate. The catalysed reaction is acetate + ATP + CoA = acetyl-CoA + AMP + diphosphate. The enzyme catalyses propanoate + ATP + CoA = propanoyl-CoA + AMP + diphosphate. It catalyses the reaction a medium-chain fatty acid + ATP + CoA = a medium-chain fatty acyl-CoA + AMP + diphosphate. Involved in the 3-hydroxypropionate/4-hydroxybutyrate cycle which incorporates carbon dioxide into cellular carbon. Catalyzes the ligation of coenzyme A (CoA) to 4-hydroxybutyrate (4HB). It can also use butyrate, valerate, propionate, acetate and 3-hydroxybutyrate (3HB) as substrates. This chain is 4-hydroxybutyrate--CoA ligase 1, found in Metallosphaera sedula (strain ATCC 51363 / DSM 5348 / JCM 9185 / NBRC 15509 / TH2).